The primary structure comprises 377 residues: Pseudouridylate synthase RPUSD4, mitochondrial (377 aa).

The interval 51–70 is disordered; that stretch reads LRAQKQQQKTKEPAPTNPVQ. The active site involves D153.

It belongs to the pseudouridine synthase RluA family. In terms of assembly, interacts with 16S mt-rRNA, mt-tRNA(Phe) and mt-tRNA(Met). Forms a regulatory protein-RNA complex, consisting of RCC1L, NGRN, RPUSD3, RPUSD4, TRUB2, FASTKD2 and 16S mt-rRNA.

It is found in the mitochondrion matrix. The protein resides in the nucleus. Its subcellular location is the cytoplasm. It catalyses the reaction uridine in 5S rRNA = pseudouridine in 5S rRNA. The enzyme catalyses a uridine in tRNA = a pseudouridine in tRNA. It carries out the reaction a uridine in mRNA = a pseudouridine in mRNA. Catalyzes uridine to pseudouridine isomerization (pseudouridylation) of different mitochondrial RNA substrates. Acts on position 1397 in 16S mitochondrial ribosomal RNA (16S mt-rRNA). This modification is required for the assembly of 16S mt-rRNA into a functional mitochondrial ribosome. As a component of a functional protein-RNA module, consisting of RCC1L, NGRN, RPUSD3, RPUSD4, TRUB2, FASTKD2 and 16S mt-rRNA, controls 16S mt-rRNA abundance and is required for intra-mitochondrial translation. Acts on position 39 in mitochondrial tRNA(Phe). Also catalyzes pseudouridylation of mRNAs in nucleus: acts as a regulator of pre-mRNA splicing by mediating pseudouridylation of pre-mRNAs at locations associated with alternatively spliced regions. Pseudouridylation of pre-mRNAs near splice sites directly regulates mRNA splicing and mRNA 3'-end processing. This chain is Pseudouridylate synthase RPUSD4, mitochondrial, found in Bos taurus (Bovine).